The primary structure comprises 347 residues: Haptoglobin (347 aa).

The first 18 residues, 1 to 18 (MRALGAVVTLLLWGQLFA), serve as a signal peptide directing secretion. The 58-residue stretch at 31 to 88 (DSCPKPPEIANGYVEHLVRYRCRQFYRLRAEGDGVYTLNDEKQWVNTVAGEKLPECEA) folds into the Sushi domain. Intrachain disulfides connect Cys52–Cys86, Cys90–Cys207, Cys250–Cys281, and Cys292–Cys322. Residues 103 to 345 (IIGGSMDAKG…LKDWVQETMA (243 aa)) enclose the Peptidase S1 domain. Asn148, Asn182, Asn256, and Asn264 each carry an N-linked (GlcNAc...) asparagine glycan. The segment at 259–264 (VPEKKN) is interaction with CD163.

It belongs to the peptidase S1 family. As to quaternary structure, tetramer of two alpha and two beta chains; disulfide-linked. The hemoglobin/haptoglobin complex is composed of a haptoglobin dimer bound to two hemoglobin alpha-beta dimers. Interacts with CD163. Interacts with ERGIC3. Expressed by the liver and secreted in plasma.

It is found in the secreted. Functionally, as a result of hemolysis, hemoglobin is found to accumulate in the kidney and is secreted in the urine. Haptoglobin captures, and combines with free plasma hemoglobin to allow hepatic recycling of heme iron and to prevent kidney damage. Haptoglobin also acts as an antioxidant, has antibacterial activity and plays a role in modulating many aspects of the acute phase response. Hemoglobin/haptoglobin complexes are rapidly cleared by the macrophage CD163 scavenger receptor expressed on the surface of liver Kupfer cells through an endocytic lysosomal degradation pathway. The polypeptide is Haptoglobin (Hp) (Mus musculus (Mouse)).